A 209-amino-acid polypeptide reads, in one-letter code: Adenylate kinase (209 aa).

10-15 (GAGKGT) contacts ATP. Positions 30–59 (STGDLFRAAIKEQTDLGKKVKAVIDSGALV) are NMP. AMP-binding positions include threonine 31, arginine 36, 57-59 (ALV), 85-88 (GFPR), and glutamine 92. The segment at 121-158 (GRRVCSSCGQSFHIEFVKPKKEGICDSCSGDLMIRPDD) is LID. ATP is bound at residue arginine 122. The Zn(2+) site is built by cysteine 125 and cysteine 128. 131-132 (SF) lines the ATP pocket. Residues cysteine 145 and cysteine 148 each contribute to the Zn(2+) site. Residues arginine 155 and arginine 166 each coordinate AMP. Proline 194 lines the ATP pocket.

Belongs to the adenylate kinase family. In terms of assembly, monomer.

Its subcellular location is the cytoplasm. It carries out the reaction AMP + ATP = 2 ADP. Its pathway is purine metabolism; AMP biosynthesis via salvage pathway; AMP from ADP: step 1/1. Catalyzes the reversible transfer of the terminal phosphate group between ATP and AMP. Plays an important role in cellular energy homeostasis and in adenine nucleotide metabolism. This Treponema denticola (strain ATCC 35405 / DSM 14222 / CIP 103919 / JCM 8153 / KCTC 15104) protein is Adenylate kinase.